A 192-amino-acid chain; its full sequence is Ras-like GTP-binding protein rhoA (192 aa).

12–19 (GDGACGKT) serves as a coordination point for GTP. The Effector region signature appears at 34–42 (YVPTVFENY). GTP-binding positions include 59 to 63 (DTAGQ) and 117 to 120 (NKRD). Cys189 carries the cysteine methyl ester modification. The S-geranylgeranyl cysteine moiety is linked to residue Cys189. Residues 190 to 192 (MIL) constitute a propeptide, removed in mature form.

This sequence belongs to the small GTPase superfamily. Rho family. May interact with unc-89 (via DN and PH domains). Interacts with bli-3 and memo-1. In terms of tissue distribution, in larvae and adults, enriched at the tip of the head where the anterior sensory organ is located and in the pharyngeal nerve ring (at protein level). In embryos, enriched at the boundaries of dorsal cells undergoing intercalation, ventral enclosure and elongation.

It localises to the cell membrane. The protein resides in the cytoplasm. The protein localises to the cytoskeleton. Its subcellular location is the cell cortex. Its activity is regulated as follows. GTP hydrolysis is stimulated by unc-89. Functionally, required for ventral migration of epidermal cells during ventral enclosure in the embryo and for cell elongation. Also required for ventral migration of P cells during larval development. Involved in asymmetric spindle positioning during anaphase and establishment of cell polarity during embryo development. In adults, involved in regulation of multiple processes including locomotion, pharyngeal pumping, fecundity, ovulation, defecation and body morphology. In body wall muscles, regulates organization of myosin thick filaments downstream of unc-89. Association with the oxidase bli-3 promotes ROS production and this interaction may be modulated by memo-1, in order to control the oxidative stress response and longevity. The polypeptide is Ras-like GTP-binding protein rhoA (Caenorhabditis elegans).